A 717-amino-acid chain; its full sequence is DNA-directed RNA polymerase subunit beta' (717 aa).

Zn(2+) contacts are provided by cysteine 71, cysteine 73, cysteine 91, and cysteine 94. Mg(2+) contacts are provided by aspartate 481, aspartate 483, and aspartate 485.

This sequence belongs to the RNA polymerase beta' chain family. RpoC1 subfamily. In terms of assembly, in plastids the minimal PEP RNA polymerase catalytic core is composed of four subunits: alpha, beta, beta', and beta''. When a (nuclear-encoded) sigma factor is associated with the core the holoenzyme is formed, which can initiate transcription. Mg(2+) serves as cofactor. Zn(2+) is required as a cofactor.

The protein resides in the plastid. The protein localises to the chloroplast. The enzyme catalyses RNA(n) + a ribonucleoside 5'-triphosphate = RNA(n+1) + diphosphate. Functionally, DNA-dependent RNA polymerase catalyzes the transcription of DNA into RNA using the four ribonucleoside triphosphates as substrates. This chain is DNA-directed RNA polymerase subunit beta', found in Chlorokybus atmophyticus (Soil alga).